A 2498-amino-acid polypeptide reads, in one-letter code: PKS-NRPS hybrid synthetase acdB (2498 aa).

An adenylation (A) domain region spans residues 34–427; that stretch reads FEQAAHAHFD…GRADSQVKIR (394 aa). A Carrier 1 domain is found at 531 to 606; the sequence is QPATELERDI…SLAGYLMDMD (76 aa). S566 is subject to O-(pantetheine 4'-phosphoryl)serine. The 432-residue stretch at 627 to 1058 folds into the Ketosynthase family 3 (KS3) domain; sequence SDDIAVVSMA…GTNAHVIVEE (432 aa). Residues C802, H938, and H979 each act as for beta-ketoacyl synthase activity in the active site. A malonyl-CoA:ACP transacylase (MAT) domain region spans residues 1165 to 1485; that stretch reads LFAGQGSQQL…EILARLHVQH (321 aa). The segment at 1739 to 1917 is ketoreductase (KR) domain; it reads GAVLITGGLS…PAVCVAYGPL (179 aa). The Carrier 2 domain maps to 2017-2092; it reads EILLRTIQEA…ELSRYLLPQL (76 aa). O-(pantetheine 4'-phosphoryl)serine is present on S2052. The tract at residues 2149–2378 is thioester reductase (TE) domain; it reads VTGATEFVGA…FPVDYVCRTI (230 aa).

In the C-terminal section; belongs to the NRP synthetase family. It depends on pantetheine 4'-phosphate as a cofactor.

It participates in secondary metabolite biosynthesis. In terms of biological role, PKS-NRPS hybrid synthetase; part of the gene cluster that mediates the biosynthesis of aspcandine, a pyrrolobenzazepine alkaloid. Initially, the indoleamine 2,3-dioxygenase acdA accepts L-tryptophan and performs the oxidative opening of the indole ring to yield N'-formyl-L-kynurenine, which undergoes the spontaneous deformylation reaction to provide L-kynurenine. The kynurenine 3-monooxygenase acdD then hydroxylates L-kynurenine to afford 3-hydroxy-L-kynurenine. 3-hydroxy-L-kynurenine is activated by the A domain of the NRPS-PKS acdB and subsequently loaded onto the enzyme. The KS domain conducts the decarboxylative condensation of the 3-hydroxy-L-kynurenyl and malonyl moieties, and subsequent nucleophilic attacks by the two amino groups would occur nonenzymatically at two distinct positions, achieving the chain release and the construction of the tricyclic system. Finally, a dehydration reaction completes the biosynthesis to yield aspcandine. This Aspergillus candidus protein is PKS-NRPS hybrid synthetase acdB.